Reading from the N-terminus, the 379-residue chain is Cytochrome b (379 aa).

4 consecutive transmembrane segments (helical) span residues 33–53, 77–98, 113–133, and 178–198; these read FGSLLGACLIIQILTGLFLAM, WLIRYLHANGASMFFICLSIHA, WNIGIILFLTTMATAFVGYVL, and FFAFHFILPFIITAFVLVHLL. 2 residues coordinate heme b: His-83 and His-97. Heme b contacts are provided by His-182 and His-196. His-201 is an a ubiquinone binding site. A run of 4 helical transmembrane segments spans residues 226-246, 288-308, 320-340, and 347-367; these read IKDLLGVFLLLLALMILALFF, LGGVLALILSILILAAFPLLN, ITQTIYWIFIANLLVLTWIGG, and FTMIGQIASITYFAIILILMP.

Belongs to the cytochrome b family. In terms of assembly, the cytochrome bc1 complex contains 11 subunits: 3 respiratory subunits (MT-CYB, CYC1 and UQCRFS1), 2 core proteins (UQCRC1 and UQCRC2) and 6 low-molecular weight proteins (UQCRH/QCR6, UQCRB/QCR7, UQCRQ/QCR8, UQCR10/QCR9, UQCR11/QCR10 and a cleavage product of UQCRFS1). This cytochrome bc1 complex then forms a dimer. Heme b is required as a cofactor.

It localises to the mitochondrion inner membrane. Component of the ubiquinol-cytochrome c reductase complex (complex III or cytochrome b-c1 complex) that is part of the mitochondrial respiratory chain. The b-c1 complex mediates electron transfer from ubiquinol to cytochrome c. Contributes to the generation of a proton gradient across the mitochondrial membrane that is then used for ATP synthesis. This is Cytochrome b (MT-CYB) from Thaptomys nigrita (Blackish grass mouse).